The sequence spans 495 residues: uncharacterized protein (495 aa).

The signal sequence occupies residues 1 to 17 (MRTLSLLILFLSTFLFA).

This is an uncharacterized protein from Aquifex aeolicus (strain VF5).